The chain runs to 440 residues: MQAYFDQLDRVRYEGPQSTNPLAFRHYNPDELVLGKRMEDHLRFAACYWHTFCWNGADMFGVGAFNRPWQQPGEALELAKRKADVAFEFLHKLNVPFYCFHDVDVSPEGASLKEYKNNFAQMVDVLAAKQEQSGVKLLWGTANCFTNPRYGAGAATNPDPEVFSWAATQVVTAMNATHKLGGENYVLWGGREGYETLLNTDLRQEREQIGRFMQMVVEHKHKMGFQGTLLIEPKPQEPTKHQYDYDVATVYGFLKQFGLEKEIKVNIEANHATLAGHSFHHEIATAIALGIFGSVDANRGDAQLGWDTDQFPISVEENALVMYEILKAGGFTTGGLNFDAKVRRQSTDKYDLFYGHIGAMDTMALSLKIAARMVEDGELDKRVAKRYAGWNGELGQQILKGQLSLGELAQYAEQHNLAPVHQSGHQELLENLVNRYLFDK.

Residues His-101 and Asp-104 contribute to the active site. Glu-232, Glu-268, His-271, Asp-296, Asp-307, Asp-309, and Asp-339 together coordinate Mg(2+).

Belongs to the xylose isomerase family. In terms of assembly, homotetramer. The cofactor is Mg(2+).

The protein localises to the cytoplasm. The enzyme catalyses alpha-D-xylose = alpha-D-xylulofuranose. This is Xylose isomerase from Salmonella paratyphi B (strain ATCC BAA-1250 / SPB7).